A 630-amino-acid chain; its full sequence is Threonine--tRNA ligase (630 aa).

The interval 1–137 is editing domain; it reads MKVLLIHSDY…PLSELSRKIT (137 aa). The interval 207–506 is catalytic; sequence PHVKFITEKE…ADAGAPPMLP (300 aa). Positions 299, 351, and 475 each coordinate Zn(2+).

This sequence belongs to the class-II aminoacyl-tRNA synthetase family. Homodimer. Requires Zn(2+) as cofactor.

It localises to the cytoplasm. The catalysed reaction is tRNA(Thr) + L-threonine + ATP = L-threonyl-tRNA(Thr) + AMP + diphosphate + H(+). Catalyzes the attachment of threonine to tRNA(Thr) in a two-step reaction: L-threonine is first activated by ATP to form Thr-AMP and then transferred to the acceptor end of tRNA(Thr). Also edits incorrectly charged L-seryl-tRNA(Thr). The protein is Threonine--tRNA ligase of Methanococcus aeolicus (strain ATCC BAA-1280 / DSM 17508 / OCM 812 / Nankai-3).